The primary structure comprises 862 residues: Probable linoleate 9S-lipoxygenase 5 (862 aa).

One can recognise a PLAT domain in the interval 36–161 (NDVNASLLDG…KYKSERIFFA (126 aa)). In terms of domain architecture, Lipoxygenase spans 164 to 862 (AYLPGETPEP…GKGIPNSVSI (699 aa)). Fe cation is bound by residues His-523, His-528, His-714, Asn-718, and Ile-862.

Belongs to the lipoxygenase family. In terms of assembly, monomer. Fe cation serves as cofactor. In terms of tissue distribution, not detected in leaves, stems, flowers, roots, tubers and stolons during normal growth and development.

The protein resides in the cytoplasm. The enzyme catalyses (9Z,12Z)-octadecadienoate + O2 = (9S)-hydroperoxy-(10E,12Z)-octadecadienoate. It functions in the pathway lipid metabolism; oxylipin biosynthesis. Its function is as follows. Plant lipoxygenases may be involved in a number of diverse aspects of plant physiology including growth and development, pest resistance, and senescence or responses to wounding. May contribute to cell death during the hypersensitive response (HR) by the massive production of free fatty acid hydroperoxides. Catalyzes the hydroperoxidation of lipids containing a cis,cis-1,4-pentadiene structure. The polypeptide is Probable linoleate 9S-lipoxygenase 5 (LOX1.5) (Solanum tuberosum (Potato)).